Here is an 835-residue protein sequence, read N- to C-terminus: Probable alpha-glucuronidase A (835 aa).

The first 18 residues, Met1–Ala18, serve as a signal peptide directing secretion. N-linked (GlcNAc...) asparagine glycosylation is found at Asn49, Asn101, Asn148, Asn221, Asn278, Asn309, Asn342, Asn460, Asn522, Asn571, Asn677, and Asn727.

This sequence belongs to the glycosyl hydrolase 67 family.

It is found in the secreted. The catalysed reaction is an alpha-D-glucuronoside + H2O = D-glucuronate + an alcohol. Alpha-glucuronidase involved in the hydrolysis of xylan, a major structural heterogeneous polysaccharide found in plant biomass representing the second most abundant polysaccharide in the biosphere, after cellulose. Releases 4-O-methylglucuronic acid from xylan. The chain is Probable alpha-glucuronidase A (aguA) from Aspergillus oryzae (strain ATCC 42149 / RIB 40) (Yellow koji mold).